The sequence spans 274 residues: Bis(5'-nucleosyl)-tetraphosphatase, symmetrical (274 aa).

It belongs to the Ap4A hydrolase family.

The enzyme catalyses P(1),P(4)-bis(5'-adenosyl) tetraphosphate + H2O = 2 ADP + 2 H(+). In terms of biological role, hydrolyzes diadenosine 5',5'''-P1,P4-tetraphosphate to yield ADP. This Shewanella baltica (strain OS195) protein is Bis(5'-nucleosyl)-tetraphosphatase, symmetrical.